The chain runs to 499 residues: Cytochrome P450 705A12 (499 aa).

Residues 4 to 24 (LIIVDFQNISIFILLCLFSFL) traverse the membrane as a helical segment. Cys-439 contributes to the heme binding site.

This sequence belongs to the cytochrome P450 family. It depends on heme as a cofactor.

It localises to the membrane. May be involved in hydroxylation of the triterpene marneral. The chain is Cytochrome P450 705A12 from Arabidopsis thaliana (Mouse-ear cress).